The following is a 315-amino-acid chain: Isoaspartyl peptidase/L-asparaginase 1 (315 aa).

Ser-169 carries the post-translational modification Phosphoserine. The active-site Nucleophile is the Thr-183. Residues 211-214 (RIGD) and 233-236 (TGKG) contribute to the substrate site.

It belongs to the Ntn-hydrolase family. In terms of assembly, heterotetramer of two alpha and two beta chains arranged as a dimer of alpha/beta heterodimers. Cleaved into an alpha and beta chain by autocatalysis; this activates the enzyme. The N-terminal residue of the beta subunit is responsible for the nucleophile hydrolase activity.

The catalysed reaction is Cleavage of a beta-linked Asp residue from the N-terminus of a polypeptide.. Functionally, acts in asparagine catabolism but also in the final steps of protein and degradation via hydrolysis of a range of isoaspartyl dipeptides. The affinity for Asn and at least 4 isoaspartyl dipeptides (L-beta-Asp-Ala, L-beta-Asp-Gly, L-beta-Asp-Leu, L-beta-Asp-Phe) is quite low, KM being greater than 4.0 mM. The enzyme is inactive on alpha-aspartyl dipeptides. The protein is Isoaspartyl peptidase/L-asparaginase 1 of Arabidopsis thaliana (Mouse-ear cress).